The sequence spans 240 residues: Flavin-dependent thymidylate synthase (240 aa).

The 223-residue stretch at 13–235 folds into the ThyX domain; sequence ITVELVKHSA…PETHAAFEKQ (223 aa). FAD-binding positions include serine 64, 87 to 89, and glutamate 95; that span reads RHR. Residues 84-87, 95-99, and arginine 167 each bind dUMP; these read EFMR and EESGR. The ThyX motif motif lies at 87 to 97; that stretch reads RHRIASYNEES. FAD contacts are provided by residues 183–185 and asparagine 189; that span reads NAR. Residue arginine 194 participates in dUMP binding. The active-site Involved in ionization of N3 of dUMP, leading to its activation is the arginine 194.

It belongs to the thymidylate synthase ThyX family. As to quaternary structure, homotetramer. It depends on FAD as a cofactor.

It catalyses the reaction dUMP + (6R)-5,10-methylene-5,6,7,8-tetrahydrofolate + NADPH + H(+) = dTMP + (6S)-5,6,7,8-tetrahydrofolate + NADP(+). The protein operates within pyrimidine metabolism; dTTP biosynthesis. Its function is as follows. Catalyzes the reductive methylation of 2'-deoxyuridine-5'-monophosphate (dUMP) to 2'-deoxythymidine-5'-monophosphate (dTMP) while utilizing 5,10-methylenetetrahydrofolate (mTHF) as the methyl donor, and NADPH and FADH(2) as the reductant. The polypeptide is Flavin-dependent thymidylate synthase (Tropheryma whipplei (strain TW08/27) (Whipple's bacillus)).